The following is a 274-amino-acid chain: Large ribosomal subunit protein uL2 (274 aa).

Residues 221–256 form a disordered region; the sequence is RGTAMNPVDHPHGGGEGRNFGKHPVTPWGVPTKGYK.

The protein belongs to the universal ribosomal protein uL2 family. In terms of assembly, part of the 50S ribosomal subunit. Forms a bridge to the 30S subunit in the 70S ribosome.

In terms of biological role, one of the primary rRNA binding proteins. Required for association of the 30S and 50S subunits to form the 70S ribosome, for tRNA binding and peptide bond formation. It has been suggested to have peptidyltransferase activity; this is somewhat controversial. Makes several contacts with the 16S rRNA in the 70S ribosome. This Thioalkalivibrio sulfidiphilus (strain HL-EbGR7) protein is Large ribosomal subunit protein uL2.